Reading from the N-terminus, the 178-residue chain is Ribulose bisphosphate carboxylase small subunit, chloroplastic (178 aa).

The N-terminal 54 residues, 1-54, are a transit peptide targeting the chloroplast; that stretch reads MASISSSVATVSRTAPAQANMVAPFTGLKSNAAFPTTKKANDFSTLPSNGGRVQ.

The protein belongs to the RuBisCO small chain family. As to quaternary structure, heterohexadecamer of 8 large and 8 small subunits.

It localises to the plastid. It is found in the chloroplast. Its function is as follows. RuBisCO catalyzes two reactions: the carboxylation of D-ribulose 1,5-bisphosphate, the primary event in carbon dioxide fixation, as well as the oxidative fragmentation of the pentose substrate. Both reactions occur simultaneously and in competition at the same active site. Although the small subunit is not catalytic it is essential for maximal activity. In Helianthus annuus (Common sunflower), this protein is Ribulose bisphosphate carboxylase small subunit, chloroplastic.